A 567-amino-acid polypeptide reads, in one-letter code: Glucose-6-phosphate isomerase, cytosolic B (567 aa).

D-glucose 6-phosphate is bound by residues 156–157 (GS), 212–217 (SKTFTT), glutamine 356, glutamate 360, histidine 391, and lysine 516. Glutamate 360 (proton donor) is an active-site residue. Residues histidine 391 and lysine 516 contribute to the active site.

Belongs to the GPI family. As to quaternary structure, homodimer.

The protein resides in the cytoplasm. It catalyses the reaction alpha-D-glucose 6-phosphate = beta-D-fructose 6-phosphate. It functions in the pathway carbohydrate degradation; glycolysis; D-glyceraldehyde 3-phosphate and glycerone phosphate from D-glucose: step 2/4. Catalyzes the conversion of glucose-6-phosphate to fructose-6-phosphate, the second step in glycolysis, and the reverse reaction during gluconeogenesis. This is Glucose-6-phosphate isomerase, cytosolic B from Oryza sativa subsp. japonica (Rice).